A 1342-amino-acid polypeptide reads, in one-letter code: DNA-directed RNA polymerase subunit beta (1342 aa).

Belongs to the RNA polymerase beta chain family. As to quaternary structure, the RNAP catalytic core consists of 2 alpha, 1 beta, 1 beta' and 1 omega subunit. When a sigma factor is associated with the core the holoenzyme is formed, which can initiate transcription.

The catalysed reaction is RNA(n) + a ribonucleoside 5'-triphosphate = RNA(n+1) + diphosphate. Functionally, DNA-dependent RNA polymerase catalyzes the transcription of DNA into RNA using the four ribonucleoside triphosphates as substrates. The sequence is that of DNA-directed RNA polymerase subunit beta from Buchnera aphidicola subsp. Acyrthosiphon pisum (strain Tuc7).